The primary structure comprises 151 residues: 3-dehydroquinate dehydratase (151 aa).

The active-site Proton acceptor is Tyr24. Asn76, His82, and Asp89 together coordinate substrate. His102 (proton donor) is an active-site residue. Residues 103-104 and Arg113 contribute to the substrate site; that span reads LS.

This sequence belongs to the type-II 3-dehydroquinase family. Homododecamer.

The catalysed reaction is 3-dehydroquinate = 3-dehydroshikimate + H2O. The protein operates within metabolic intermediate biosynthesis; chorismate biosynthesis; chorismate from D-erythrose 4-phosphate and phosphoenolpyruvate: step 3/7. In terms of biological role, catalyzes a trans-dehydration via an enolate intermediate. The protein is 3-dehydroquinate dehydratase of Acinetobacter baumannii (strain ATCC 17978 / DSM 105126 / CIP 53.77 / LMG 1025 / NCDC KC755 / 5377).